A 429-amino-acid chain; its full sequence is Adenylosuccinate synthetase (429 aa).

GTP contacts are provided by residues 12-18 and 40-42; these read GDEGKGK and GHT. The active-site Proton acceptor is the Asp13. Mg(2+) contacts are provided by Asp13 and Gly40. IMP contacts are provided by residues 13–16, 38–41, Thr129, Arg143, Gln223, Thr238, and Arg302; these read DEGK and NAGH. The active-site Proton donor is the His41. 298-304 contributes to the substrate binding site; that stretch reads VVTGRKR. Residues Arg304, 330-332, and 412-414 contribute to the GTP site; these read KLD and STS.

The protein belongs to the adenylosuccinate synthetase family. Homodimer. It depends on Mg(2+) as a cofactor.

It localises to the cytoplasm. It carries out the reaction IMP + L-aspartate + GTP = N(6)-(1,2-dicarboxyethyl)-AMP + GDP + phosphate + 2 H(+). It functions in the pathway purine metabolism; AMP biosynthesis via de novo pathway; AMP from IMP: step 1/2. Plays an important role in the de novo pathway of purine nucleotide biosynthesis. Catalyzes the first committed step in the biosynthesis of AMP from IMP. The protein is Adenylosuccinate synthetase of Brucella suis (strain ATCC 23445 / NCTC 10510).